We begin with the raw amino-acid sequence, 894 residues long: UPF0182 protein GSU2333 (894 aa).

7 helical membrane-spanning segments follow: residues 6–26 (FLLI…LITF), 50–70 (VGAG…NLYF), 98–118 (MVQM…LLAG), 162–182 (KGFV…VYFF), 203–223 (LAIL…LDAV), 250–270 (ILTL…WKGA), and 275–295 (LIPP…YPAM).

This sequence belongs to the UPF0182 family.

Its subcellular location is the cell membrane. This is UPF0182 protein GSU2333 from Geobacter sulfurreducens (strain ATCC 51573 / DSM 12127 / PCA).